Consider the following 142-residue polypeptide: MAKKVMAMVKLQIPAGKATPAPPVGPALGQHGVNIMAFVKEYNERTAGQVGLIIPVEITVYADRTFSFVTKTPPASVLLKKAAGIETASGQPHVKKVGKVTRTKVREIAELKMPDLNAADVEAAVRMVEGTARSMGIEIVEG.

Belongs to the universal ribosomal protein uL11 family. Part of the ribosomal stalk of the 50S ribosomal subunit. Interacts with L10 and the large rRNA to form the base of the stalk. L10 forms an elongated spine to which L12 dimers bind in a sequential fashion forming a multimeric L10(L12)X complex. Post-translationally, one or more lysine residues are methylated.

Its function is as follows. Forms part of the ribosomal stalk which helps the ribosome interact with GTP-bound translation factors. The polypeptide is Large ribosomal subunit protein uL11 (Desulforudis audaxviator (strain MP104C)).